Consider the following 101-residue polypeptide: UPF0235 protein MmarC5_0538 (101 aa).

Belongs to the UPF0235 family.

This is UPF0235 protein MmarC5_0538 from Methanococcus maripaludis (strain C5 / ATCC BAA-1333).